Consider the following 923-residue polypeptide: MSELESEYRLEYFETEGFHRKQCPVTDVYFWTRDPDRETCGEPPADDYSFIDNPGFDDQYSLSGMREEFLSFFESRDHDRIEPYPVAANRWRDDVLLTQASIYDFQPLVTSGQTPPPANPLCISQPCIRMQDIDNVGKTGRHTMAFEMMAHHAFNTREDASDEYAYTGEVYWKDETVRLCDAFFEHMGADLTEITYIEDPWVGGGNAGPAFEVLYRGAELATLVFMSMEQDESGEYEMKDGNRYSPMDTYVVDTGYGLERWAWVSQGTPTVYEAVYPDTIEFLKNDADVTHTTDEKELIQQAAMLSGYLDIDEIDNLASARADVADELDVDPSVLTDLLEPLESIYAIADHYRTLAYMFGDEIVPSNVGTGYLTRMVLRRTQRLIDDIGIDAPLDELVDMQAERLGYENRDTIRDIVRTEDRKYRETLSRGRRRVETLADEYADRNESIPVDELIELYDSHGIQPDMVTEIASDRGATVEIPDDFYSLVADRHTDDDTTETIEKRRDRLADLPETDRLYYDDQTGTEFEAVVLDIFEQDTGYDIVLDQTMFYPEGGGQPADHGTLTTEEETIEITDVKAQDGVILHQATENPGKGDFIRGQLDVERRRRLMQHHTATHIIGHAARKVLGDHVRQAGAQKGTDSARFDLTHYERINRIEAKTIESVANDIIRQNISVRQDWPDRHEAENEHGFDLYQGGIPPGQNIRTITIGDDIQACGGTHVTRTGDIGTIKILTTEPVQDGVERIVFAAGDAAIDAVQTTEDALYDAADVLDVTPEHVPETADRFFTEWKERGKTIDKLKSELAEARAQGVTADAVSIDGIDAVIKTVNGDADELRKTANAIVDEDAVAVLGSDVDGSAQFVVGVPEDIGINAGDVVGQLARKVGGGGGGPPDFAQGGGPDAASLEVALDDATSVLRSMHET.

Positions 614, 618, 717, and 721 each coordinate Zn(2+). Residues 884–903 (KVGGGGGGPPDFAQGGGPDA) form a disordered region. Positions 885–901 (VGGGGGGPPDFAQGGGP) are enriched in gly residues.

It belongs to the class-II aminoacyl-tRNA synthetase family. Zn(2+) serves as cofactor.

Its subcellular location is the cytoplasm. The enzyme catalyses tRNA(Ala) + L-alanine + ATP = L-alanyl-tRNA(Ala) + AMP + diphosphate. Catalyzes the attachment of alanine to tRNA(Ala) in a two-step reaction: alanine is first activated by ATP to form Ala-AMP and then transferred to the acceptor end of tRNA(Ala). Also edits incorrectly charged Ser-tRNA(Ala) and Gly-tRNA(Ala) via its editing domain. This Haloquadratum walsbyi (strain DSM 16790 / HBSQ001) protein is Alanine--tRNA ligase.